The chain runs to 44 residues: Conotoxin Cl9a (44 aa).

4-carboxyglutamate is present on residues Glu7, Glu8, and Glu24. Intrachain disulfides connect Cys9–Cys33, Cys15–Cys40, and Cys23–Cys42.

In terms of tissue distribution, expressed by the venom duct.

It is found in the secreted. The polypeptide is Conotoxin Cl9a (Californiconus californicus (California cone)).